A 161-amino-acid polypeptide reads, in one-letter code: 3-hydroxyacyl-[acyl-carrier-protein] dehydratase FabZ (161 aa).

Histidine 55 is an active-site residue.

Belongs to the thioester dehydratase family. FabZ subfamily.

The protein resides in the cytoplasm. It carries out the reaction a (3R)-hydroxyacyl-[ACP] = a (2E)-enoyl-[ACP] + H2O. Involved in unsaturated fatty acids biosynthesis. Catalyzes the dehydration of short chain beta-hydroxyacyl-ACPs and long chain saturated and unsaturated beta-hydroxyacyl-ACPs. This chain is 3-hydroxyacyl-[acyl-carrier-protein] dehydratase FabZ, found in Jannaschia sp. (strain CCS1).